The primary structure comprises 149 residues: Putative pre-16S rRNA nuclease (149 aa).

This sequence belongs to the YqgF nuclease family.

It is found in the cytoplasm. Functionally, could be a nuclease involved in processing of the 5'-end of pre-16S rRNA. This is Putative pre-16S rRNA nuclease from Heliobacterium modesticaldum (strain ATCC 51547 / Ice1).